The primary structure comprises 442 residues: UDP-glycosyltransferase 79B8 (442 aa).

Residues serine 260, 319–321, 336–344, and 358–361 each bind UDP-alpha-D-glucose; these read VQQ, HCGPGTIWE, and LGDQ.

This sequence belongs to the UDP-glycosyltransferase family.

The sequence is that of UDP-glycosyltransferase 79B8 (UGT79B8) from Arabidopsis thaliana (Mouse-ear cress).